A 446-amino-acid polypeptide reads, in one-letter code: UDP-N-acetylglucosamine--dolichyl-phosphate N-acetylglucosaminephosphotransferase (446 aa).

The next 2 helical transmembrane spans lie at 1–21 (MIES…LMNQ) and 25–45 (PLLS…MFIP). Residues 59-61 (KDM) and glutamate 71 each bind UDP-N-acetyl-alpha-D-glucosamine. 2 helical membrane-spanning segments follow: residues 73–93 (MGAV…PVLF) and 123–143 (LLGA…LGIL). Lysine 154 provides a ligand contact to dolichyl phosphate. 2 helical membrane passes run 155-175 (FFLP…DYGV) and 191-211 (SLIN…IFCP). 208–216 (IFCPNSINI) is a dolichyl phosphate binding site. Asparagine 215 contacts Mg(2+). Helical transmembrane passes span 216–236 (IIAG…LVIA), 254–274 (AHLL…GLLK), 282–302 (VFVG…VGIL), and 311–331 (LFFI…FGLV). Residue asparagine 221 participates in UDP-N-acetyl-alpha-D-glucosamine binding. Aspartate 286 lines the Mg(2+) pocket. 335–337 (RHR) is a UDP-N-acetyl-alpha-D-glucosamine binding site. Asparagine 395 carries N-linked (GlcNAc...) asparagine glycosylation. The chain crosses the membrane as a helical span at residues 412 to 432 (DHLTICIMGLQLLTGIFGLII).

This sequence belongs to the glycosyltransferase 4 family. The cofactor is Mg(2+).

It is found in the endoplasmic reticulum membrane. It catalyses the reaction a di-trans,poly-cis-dolichyl phosphate + UDP-N-acetyl-alpha-D-glucosamine = an N-acetyl-alpha-D-glucosaminyl-diphospho-di-trans,poly-cis-dolichol + UMP. It participates in protein modification; protein glycosylation. Its activity is regulated as follows. Inhibited by natural nucleoside antibiotic tunicamycin, which acts as a structural analog and competitor of UDP-GlcNAc. UDP-N-acetylglucosamine--dolichyl-phosphate N-acetylglucosaminephosphotransferase that operates in the biosynthetic pathway of dolichol-linked oligosaccharides, the glycan precursors employed in protein asparagine (N)-glycosylation. The assembly of dolichol-linked oligosaccharides begins on the cytosolic side of the endoplasmic reticulum membrane and finishes in its lumen. The sequential addition of sugars to dolichol pyrophosphate produces dolichol-linked oligosaccharides containing fourteen sugars, including two GlcNAcs, nine mannoses and three glucoses. Once assembled, the oligosaccharide is transferred from the lipid to nascent proteins by oligosaccharyltransferases. Catalyzes the initial step of dolichol-linked oligosaccharide biosynthesis, transfering GlcNAc-1-P from cytosolic UDP-GlcNAc onto the carrier lipid dolichyl phosphate (P-dolichol), yielding GlcNAc-P-P-dolichol embedded in the cytoplasmic leaflet of the endoplasmic reticulum membrane. This chain is UDP-N-acetylglucosamine--dolichyl-phosphate N-acetylglucosaminephosphotransferase (gpt2), found in Schizosaccharomyces pombe (strain 972 / ATCC 24843) (Fission yeast).